The following is a 477-amino-acid chain: Bifunctional protein HldE (477 aa).

Residues 1–318 form a ribokinase region; sequence MKVNLPAFER…ENAVRGRADT (318 aa). 195–198 contacts ATP; that stretch reads NLSE. The active site involves Asp-264. The interval 344–477 is cytidylyltransferase; the sequence is MTNGVFDILH…IKKIQTESEK (134 aa).

It in the N-terminal section; belongs to the carbohydrate kinase PfkB family. This sequence in the C-terminal section; belongs to the cytidylyltransferase family. As to quaternary structure, homodimer.

It catalyses the reaction D-glycero-beta-D-manno-heptose 7-phosphate + ATP = D-glycero-beta-D-manno-heptose 1,7-bisphosphate + ADP + H(+). The catalysed reaction is D-glycero-beta-D-manno-heptose 1-phosphate + ATP + H(+) = ADP-D-glycero-beta-D-manno-heptose + diphosphate. It participates in nucleotide-sugar biosynthesis; ADP-L-glycero-beta-D-manno-heptose biosynthesis; ADP-L-glycero-beta-D-manno-heptose from D-glycero-beta-D-manno-heptose 7-phosphate: step 1/4. It functions in the pathway nucleotide-sugar biosynthesis; ADP-L-glycero-beta-D-manno-heptose biosynthesis; ADP-L-glycero-beta-D-manno-heptose from D-glycero-beta-D-manno-heptose 7-phosphate: step 3/4. Catalyzes the phosphorylation of D-glycero-D-manno-heptose 7-phosphate at the C-1 position to selectively form D-glycero-beta-D-manno-heptose-1,7-bisphosphate. In terms of biological role, catalyzes the ADP transfer from ATP to D-glycero-beta-D-manno-heptose 1-phosphate, yielding ADP-D-glycero-beta-D-manno-heptose. This Salmonella dublin (strain CT_02021853) protein is Bifunctional protein HldE.